Here is a 157-residue protein sequence, read N- to C-terminus: Small ribosomal subunit protein uS7 (157 aa).

Belongs to the universal ribosomal protein uS7 family. Part of the 30S ribosomal subunit. Contacts proteins S9 and S11.

Functionally, one of the primary rRNA binding proteins, it binds directly to 16S rRNA where it nucleates assembly of the head domain of the 30S subunit. Is located at the subunit interface close to the decoding center, probably blocks exit of the E-site tRNA. The polypeptide is Small ribosomal subunit protein uS7 (Hydrogenovibrio crunogenus (strain DSM 25203 / XCL-2) (Thiomicrospira crunogena)).